Reading from the N-terminus, the 1161-residue chain is Lethal(2) giant larvae protein (1161 aa).

The interval 15 to 86 (DRHRLQKDLF…NNSASELNVQ (72 aa)) is phospho-regulated basic and hydrophobic (PRBH) motif. WD repeat units follow at residues 39–72 (SALA…LYGQ), 82–128 (ELNV…DGKL), 131–167 (VSSL…EPVI), 189–223 (SIRQ…QRAY), 231–263 (SVGL…PEPP), 278–320 (SINR…GHKV), 328–358 (VIDF…AYDL), and 380–464 (TCNY…YNFK). Residues Ser-473 and Ser-484 each carry the phosphoserine modification. 2 WD repeats span residues 513–594 (KKIA…SGVL) and 603–664 (TCMA…LRES). Phosphoserine is present on Ser-679. WD repeat units lie at residues 708–778 (VRCL…KEIQ), 787–832 (GISI…LKPI), 837–927 (LTAN…LNAA), and 941–964 (CFTN…ALAT). Ser-808, Ser-869, Ser-876, Ser-887, Ser-889, and Ser-893 each carry phosphoserine. The residue at position 1013 (Ser-1013) is a Phosphoserine. The tract at residues 1141-1161 (EKTNGDNKIGTPKTAPEESQF) is disordered.

The protein belongs to the WD repeat L(2)GL family. In terms of assembly, may form multimeric complexes. Interacts with mahj. Interacts with aPKC; leading to phosphorylation. Interacts with ball. Phosphorylated by aPKC which lowers lipid affinity and promotes dissociation from the cell cortex. In developing oocytes, aPKC-mediated phosphorylation restricts activity to the oocyte posterior and is required for oocyte polarity formation. Expressed in the epithelial cells of the digestive tract and in gonads.

It localises to the cytoplasm. It is found in the cell cortex. Functionally, essential for the development of polarized epithelia, for cell polarity associated with asymmetric cell division of neuroblasts during development, and for oocyte polarity formation. Promotes the formation of actin-rich projections at the oocyte cortex and the posterior enrichment of par-1 which is required for oocyte polarization. Regulates the localization of axis-specifying morphogens such as stau and grk. Has an essential role in control of cell proliferation and differentiation during development and could act as a tumor suppressor. Its function is as follows. Has an accessory function in control of cell proliferation and differentiation during development. The chain is Lethal(2) giant larvae protein (l(2)gl) from Drosophila melanogaster (Fruit fly).